The following is a 126-amino-acid chain: UPF0102 protein DNO_0639 (126 aa).

Belongs to the UPF0102 family.

This is UPF0102 protein DNO_0639 from Dichelobacter nodosus (strain VCS1703A).